Reading from the N-terminus, the 79-residue chain is uncharacterized protein (79 aa).

Residues 1-24 form the signal peptide; it reads MNKFLNLIGLAFVLVLCAFSCSNA. In terms of domain architecture, LysM spans 32-78; sequence SWHVAQKGYTCYDMATSCKVTLDQFMRTNKLDNNACKLVQIGRKYCC.

The protein localises to the secreted. This is an uncharacterized protein from Dictyostelium discoideum (Social amoeba).